The following is a 5400-amino-acid chain: Midasin (5400 aa).

AAA-ATPase protomer regions lie at residues 345 to 571 (MVSL…HGLP), 656 to 986 (LLEK…AIKA), 1050 to 1308 (SYVK…EKVV), 1347 to 1652 (SMRR…VNMA), 1769 to 2023 (VLRV…VLRI), and 2074 to 2347 (IRQN…MMGP). Residues 360 to 367 (GPSGSGKS), 674 to 681 (GETGTGKT), 1079 to 1086 (GPTSSGKT), 1369 to 1376 (GDTGGGKT), 1786 to 1793 (GSPGVGKT), and 2095 to 2102 (GPSSSGKT) contribute to the ATP site. Residues 2435–4569 (IYLSSLGVTD…DGVGAKDVSD (2135 aa)) are linker. Coiled coils occupy residues 2896 to 2916 (LERLKLEKKRLEDKMGFSEID), 3233 to 3253 (AMKITCKLLKLEEKISSLELN), and 3896 to 3916 (MEQLDLNRKNVETELKEVLKL). Disordered regions lie at residues 4540-4890 (EEDD…SSSN), 4905-4929 (TLTDNLPKMEFPQNQSSTAQQTKVN), and 4990-5069 (QVNT…RMDS). Positions 4576-4612 (QLHGTDKKEEEEKEQDDVLGKNKGIEMSDEFDGKEYS) are enriched in basic and acidic residues. Acidic residues predominate over residues 4613 to 4631 (VSEDEEEDKEDEGSEDEPL). Composition is skewed to basic and acidic residues over residues 4641-4652 (DAEKADEKPWNK) and 4661-4687 (MNEKNESGPSIVDKDTRSRELRAKDDG). Composition is skewed to acidic residues over residues 4688–4698 (VETADEPEESN) and 4706–4721 (GNDENVEQDDFDDTDN). A compositionally biased stretch (basic and acidic residues) spans 4722 to 4732 (LEEKIQTKEEA). Acidic residues predominate over residues 4740 to 4750 (VDNEQIDDDME). Basic and acidic residues predominate over residues 4751 to 4762 (MDKTEEVEKEDA). The segment covering 4779–4798 (GENDQEETQEPSEENMEAEA) has biased composition (acidic residues). Over residues 4799-4810 (EDRCGSPQKEEP) the composition is skewed to basic and acidic residues. A compositionally biased stretch (acidic residues) spans 4811–4822 (GNDLEQEPETEP). The span at 4823 to 4834 (IEGKEVMSEDMM) shows a compositional bias: basic and acidic residues. 4 stretches are compositionally biased toward polar residues: residues 4839 to 4855 (RNDNISGVESGSQNPHG), 4864 to 4874 (TAPQENLSATD), 4916 to 4928 (PQNQSSTAQQTKV), and 5030 to 5040 (SKPSISNSIAE). A Nuclear localization signal motif is present at residues 5157–5164 (MKKVIPYI). Positions 5186 to 5387 (QVVIAVDDSR…EALPRTLGDV (202 aa)) constitute a VWFA domain. A coiled-coil region spans residues 5271–5291 (VVNLLRNMNEMLENLASTRRQ).

It belongs to the midasin family. As to quaternary structure, associates with pre-60S ribosomes in the nucleoplasm. Constitutively and ubiquitously expressed. Mostly observed in the shoot apex and root tip, and, to a lower extent, in mature seeds, seedling (excluding the hypocotyl), roots, stems, leaves and flowers.

It is found in the nucleus. It localises to the nucleolus. Its subcellular location is the nucleoplasm. Nuclear chaperone required for maturation and nuclear export of pre-60S ribosome subunits. Functions at successive maturation steps to remove ribosomal factors at critical transition points, first driving the exit of early pre-60S particles from the nucleolus and then driving late pre-60S particles from the nucleus. Required for female gametophyte development. Involved in the expression regulation of genes related to plant growth and development. The chain is Midasin from Arabidopsis thaliana (Mouse-ear cress).